We begin with the raw amino-acid sequence, 299 residues long: Peroxisomal biogenesis factor 19 (299 aa).

Residues 1-61 (MAAAEEGCGV…KRAPGDTAKD (61 aa)) are disordered. Alanine 2 carries the N-acetylalanine modification. The docking to the peroxisome membrane and binding to PEX3 stretch occupies residues 2–56 (AAAEEGCGVGVEDDRELEELLESALDDFDKAKPSPEHAPTISAPDASGPQKRAPG). Residues 2–91 (AAAEEGCGVG…QATAEFEKAM (90 aa)) form a necessary for PEX19 function on peroxisome biogenesis region. Acidic residues predominate over residues 12-27 (VEDDRELEELLESALD). Phosphoserine is present on residues serine 35 and serine 66. Position 236 is a phosphothreonine (threonine 236). Cysteine 296 bears the Cysteine methyl ester mark. Residue cysteine 296 is the site of S-farnesyl cysteine attachment. Residues 297 to 299 (LIM) constitute a propeptide, removed in mature form.

It belongs to the peroxin-19 family. In terms of assembly, interacts with a broad range of peroxisomal membrane proteins, including PEX3, PEX10, PEX11A, PEX11B, PEX12, PEX13, PEX14 and PEX16, PXMP2/PMP22, PXMP4/PMP24, SLC25A17/PMP34, ABCD1/ALDP, ABCD2/ALDRP, and ABCD3/PMP70. Also interacts with the tumor suppressor CDKN2A/p19ARF.

It is found in the cytoplasm. Its subcellular location is the peroxisome membrane. Necessary for early peroxisomal biogenesis. Acts both as a cytosolic chaperone and as an import receptor for peroxisomal membrane proteins (PMPs). Binds and stabilizes newly synthesized PMPs in the cytoplasm by interacting with their hydrophobic membrane-spanning domains, and targets them to the peroxisome membrane by binding to the integral membrane protein PEX3. Excludes CDKN2A from the nucleus and prevents its interaction with MDM2, which results in active degradation of TP53. The protein is Peroxisomal biogenesis factor 19 (Pex19) of Mus musculus (Mouse).